Consider the following 89-residue polypeptide: Small ribosomal subunit protein uS17 (89 aa).

It belongs to the universal ribosomal protein uS17 family. As to quaternary structure, part of the 30S ribosomal subunit.

One of the primary rRNA binding proteins, it binds specifically to the 5'-end of 16S ribosomal RNA. This Coxiella burnetii (strain RSA 493 / Nine Mile phase I) protein is Small ribosomal subunit protein uS17.